A 278-amino-acid chain; its full sequence is MNNADLYRKSNSLQKRDALRCLEEHANKIKWKKIGDRVIDLGCADGSVTDILKVYMPKNYGRLVGCDISEEMVKYANKHHGFGRTSFRVLDIEGDLTADLKQGFDHVFSFYTLHWIRDQERAFRNIFNLLGDEGDCLLLFLGHTPIFDVYRTLSHTEKWHSWLEHVDRFISPYHDNEDPEKEVKKIMERVGFSNIEVQCKTLFYVYDDLDVLKKSVAAINPFNIPKDILEDFLEDYIDVVREMRLLDRCNNNVGESVSIKFNYKVISVYARKLCLSLM.

The protein belongs to the methyltransferase superfamily. In terms of tissue distribution, specifically expressed in the corpora allata (CA).

It catalyses the reaction (2E,6E)-farnesoate + S-adenosyl-L-methionine = methyl (2E,6E)-farnesoate + S-adenosyl-L-homocysteine. The enzyme catalyses juvenile hormone III carboxylate + S-adenosyl-L-methionine = juvenile hormone III + S-adenosyl-L-homocysteine. O-methyltransferase that transfers a methyl group from S-adenosyl-L-methionine (SAM) to the carboxyl group of juvenile hormone acids to produce active juvenile hormones in the corpora allata, the last step during juvenile hormone biosynthesis. Also able to methylate farnesoate to methyl farnesoate. The chain is Juvenile hormone acid O-methyltransferase from Bombyx mori (Silk moth).